The sequence spans 461 residues: Gustatory and pheromone receptor 32a (461 aa).

Topologically, residues 1–100 (MSPNTWVIEM…YSFFVRGVVH (100 aa)) are cytoplasmic. The chain crosses the membrane as a helical span at residues 101–121 (ALTIFNVYSLFTPISAQLFFS). Residues 122–127 (YRETDN) are Extracellular-facing. The chain crosses the membrane as a helical span at residues 128-148 (VNQWIELLLCILTYTLTVFVC). Residues 149 to 180 (AHNTTSMLRIMNEILQLDEEVRRQFGANLSQN) are Cytoplasmic-facing. The helical transmembrane segment at 181-201 (FGFLVKFLVGITACQAYIIVL) threads the bilayer. The Extracellular portion of the chain corresponds to 202–214 (KIYAVQGEITPTS). The helical transmembrane segment at 215–235 (YILLAFYGIQNGLTATYIVFA) threads the bilayer. Residues 236 to 317 (SALLRIVYIR…YKGINDCCNL (82 aa)) lie on the Cytoplasmic side of the membrane. A helical membrane pass occupies residues 318 to 338 (ILVSFLGYSFYTVTTNCYNLF). The Extracellular segment spans residues 339-348 (VQITGKGMVS). A helical membrane pass occupies residues 349–369 (PNILQWCFAWLCLHVSLLALL). The Cytoplasmic segment spans residues 370–414 (SRSCGLTTTEANATSQILARVYAKSKEYQNIIDKFLTKSIKQEVQ). A helical transmembrane segment spans residues 415–435 (FTAYGFFAIDNSTLFKIFSAV). Topologically, residues 436 to 461 (TTYLVILIQFKQLEDSKVEDPVPEQT) are extracellular.

This sequence belongs to the insect chemoreceptor superfamily. Gustatory receptor (GR) family. Gr21a subfamily. As to expression, expressed in the adult labellar chemosensory neurons. Expressed in tarsal neurons for male-male courtship suppression. In larvae, is expressed in neurons of the terminal external chemosensory organ, and the dorsal and posterior external chemosensory organs.

Its subcellular location is the cell membrane. Functionally, gustatory receptor which mediates acceptance or avoidance behavior, depending on its substrates. Required for the response to N,N-Diethyl-meta-toluamide (DEET), the most widely used insect repellent worldwide. Functions as a pheromone receptor for a male inhibitory pheromone and promotes male-male aggression and suppresses male-male courtship. Also promotes preferentially virgin females courting over mated females. The sequence is that of Gustatory and pheromone receptor 32a (Gr32a) from Drosophila melanogaster (Fruit fly).